We begin with the raw amino-acid sequence, 219 residues long: PRELI domain-containing protein 1, mitochondrial (219 aa).

The PRELI/MSF1 domain occupies 36-174; that stretch reads TEDIVHREVT…ILAKLQGEAP (139 aa).

In terms of assembly, forms a complex with TRIAP1 in the mitochondrion intermembrane space. Interacts with OPA1 and AIFM1.

It is found in the mitochondrion. The protein localises to the mitochondrion intermembrane space. It catalyses the reaction a 1,2-diacyl-sn-glycero-3-phosphate(in) = a 1,2-diacyl-sn-glycero-3-phosphate(out). In terms of biological role, involved in the modulation of the mitochondrial apoptotic pathway by ensuring the accumulation of cardiolipin (CL) in mitochondrial membranes. In vitro, the TRIAP1:PRELID1 complex mediates the transfer of phosphatidic acid (PA) between liposomes and probably functions as a PA transporter across the mitochondrion intermembrane space to provide PA for CL synthesis in the inner membrane. Regulates the mitochondrial apoptotic pathway in primary Th cells. Regulates Th cell differentiation by down-regulating STAT6 thereby reducing IL-4-induced Th2 cell number. May be important for the development of vital and immunocompetent organs. The polypeptide is PRELI domain-containing protein 1, mitochondrial (PRELID1) (Bos taurus (Bovine)).